A 528-amino-acid polypeptide reads, in one-letter code: GMP synthase [glutamine-hydrolyzing] (528 aa).

In terms of domain architecture, Glutamine amidotransferase type-1 spans 13–204 (SIVILDFGSQ…VHNICRSKPD (192 aa)). The active-site Nucleophile is the Cys90. Catalysis depends on residues His178 and Glu180. In terms of domain architecture, GMPS ATP-PPase spans 205–403 (WTTNTFIDEA…LGLPEEIVNR (199 aa)). An ATP-binding site is contributed by 232–238 (SGGVDSS).

Homodimer.

The enzyme catalyses XMP + L-glutamine + ATP + H2O = GMP + L-glutamate + AMP + diphosphate + 2 H(+). It participates in purine metabolism; GMP biosynthesis; GMP from XMP (L-Gln route): step 1/1. In terms of biological role, catalyzes the synthesis of GMP from XMP. The chain is GMP synthase [glutamine-hydrolyzing] from Prochlorococcus marinus (strain SARG / CCMP1375 / SS120).